The following is a 354-amino-acid chain: Rhodopsin (354 aa).

Residues 1-36 lie on the Extracellular side of the membrane; sequence MNGTEGPMFYVPMSNATGVVKSPYDYPQYYLVAPWA. N-linked (GlcNAc...) asparagine glycosylation is found at N2 and N15. The helical transmembrane segment at 37-61 threads the bilayer; it reads YGCLAAYMFFLIITGFPINFLTLYV. The Cytoplasmic segment spans residues 62–73; it reads TIEHKKLRTPLN. The helical transmembrane segment at 74 to 96 threads the bilayer; the sequence is YILLNLAISDLFMVFGGFTTTMY. Residues 97–110 are Extracellular-facing; that stretch reads TSLHGYFVFGRIGC. A disulfide bridge connects residues C110 and C187. The chain crosses the membrane as a helical span at residues 111 to 133; that stretch reads NLEGFFATLGGEMGLWSLVVLAF. The short motif at 134–136 is the 'Ionic lock' involved in activated form stabilization element; that stretch reads ERW. At 134–152 the chain is on the cytoplasmic side; that stretch reads ERWMVVCKPVSNFRFGENH. Residues 153–173 form a helical membrane-spanning segment; it reads AIMGVVFTWFMACTCAVPPLV. Residues 174–202 lie on the Extracellular side of the membrane; the sequence is GWSRYIPEGMQCSCGVDYYTRAPGYNNES. A helical membrane pass occupies residues 203–224; sequence FVIYMFLVHFIIPLIVIFFCYG. Residues 225–252 are Cytoplasmic-facing; that stretch reads RLVCTVKDAAAQQQESETTQRAEREVTR. The chain crosses the membrane as a helical span at residues 253–274; that stretch reads MVVIMVIGFLICWIPYASVAWY. Residues 275–286 are Extracellular-facing; it reads IFTHQGSEFGPV. A helical membrane pass occupies residues 287–308; the sequence is FMTVPAFFAKSAAVYNPCIYIC. The residue at position 296 (K296) is an N6-(retinylidene)lysine. The Cytoplasmic portion of the chain corresponds to 309–354; it reads MNKQFRHCMITTLCCGKNPFEEEEGASTTASKTEASSVSSSSVSPA. Residues C322 and C323 are each lipidated (S-palmitoyl cysteine). A disordered region spans residues 333–354; it reads GASTTASKTEASSVSSSSVSPA. Residues 334–354 are compositionally biased toward low complexity; the sequence is ASTTASKTEASSVSSSSVSPA.

It belongs to the G-protein coupled receptor 1 family. Opsin subfamily. In terms of processing, phosphorylated on some or all of the serine and threonine residues present in the C-terminal region. Post-translationally, contains one covalently linked retinal chromophore.

The protein resides in the membrane. It is found in the cell projection. Its subcellular location is the cilium. The protein localises to the photoreceptor outer segment. In terms of biological role, photoreceptor required for image-forming vision at low light intensity. While most salt water fish species use retinal as chromophore, most freshwater fish use 3-dehydroretinal, or a mixture of retinal and 3-dehydroretinal. Light-induced isomerization of 11-cis to all-trans retinal triggers a conformational change that activates signaling via G-proteins. Subsequent receptor phosphorylation mediates displacement of the bound G-protein alpha subunit by arrestin and terminates signaling. The chain is Rhodopsin (rho) from Cyprinus carpio (Common carp).